A 119-amino-acid polypeptide reads, in one-letter code: Large ribosomal subunit protein uL18 (119 aa).

The protein belongs to the universal ribosomal protein uL18 family. Part of the 50S ribosomal subunit; part of the 5S rRNA/L5/L18/L25 subcomplex. Contacts the 5S and 23S rRNAs.

Functionally, this is one of the proteins that bind and probably mediate the attachment of the 5S RNA into the large ribosomal subunit, where it forms part of the central protuberance. The protein is Large ribosomal subunit protein uL18 of Mesorhizobium japonicum (strain LMG 29417 / CECT 9101 / MAFF 303099) (Mesorhizobium loti (strain MAFF 303099)).